Reading from the N-terminus, the 502-residue chain is UTP--glucose-1-phosphate uridylyltransferase 2 (502 aa).

A disordered region spans residues 1–20; sequence MMKPDLNSPLPQSPQLQAFG. Over residues 9–20 the composition is skewed to polar residues; that stretch reads PLPQSPQLQAFG. UTP is bound by residues 114–117, Lys-128, Gln-191, and Gly-220; that span reads LNGG. A substrate-binding site is contributed by 116–117; the sequence is GG. Substrate contacts are provided by residues His-221 and 249–251; that span reads NVD. Residues Asp-251 and Lys-390 each contribute to the UTP site.

This sequence belongs to the UDPGP type 1 family.

The enzyme catalyses alpha-D-glucose 1-phosphate + UTP + H(+) = UDP-alpha-D-glucose + diphosphate. In terms of biological role, plays a central role as a glucosyl donor in cellular metabolic pathways. This chain is UTP--glucose-1-phosphate uridylyltransferase 2 (ugpB), found in Dictyostelium discoideum (Social amoeba).